Here is a 572-residue protein sequence, read N- to C-terminus: AAA ATPase forming ring-shaped complexes (572 aa).

Over residues 1 to 18 (MTTASQQTSSHSTASSTS) the composition is skewed to low complexity. Positions 1–30 (MTTASQQTSSHSTASSTSRKGNNNDATPSL) are disordered. The stretch at 42–70 (TRNAKLVEMLKASRDKLDALNEQIRALSD) forms a coiled coil. 258–263 (GCGKTL) provides a ligand contact to ATP. The tract at residues 543 to 572 (VAHHNRKTTTETEATEPEGTDSGKGHTDAS) is disordered. Basic and acidic residues predominate over residues 563–572 (DSGKGHTDAS).

The protein belongs to the AAA ATPase family. As to quaternary structure, homohexamer. Assembles into a hexameric ring structure.

The polypeptide is AAA ATPase forming ring-shaped complexes (Corynebacterium kroppenstedtii (strain DSM 44385 / JCM 11950 / CIP 105744 / CCUG 35717)).